We begin with the raw amino-acid sequence, 180 residues long: LDLR chaperone boca (180 aa).

The N-terminal stretch at 1 to 18 is a signal peptide; the sequence is MQTRLVLLLLALTPLVLA. A compositionally biased stretch (acidic residues) spans 48-61; that stretch reads QWEEDEEPLEDDEL. A disordered region spans residues 48 to 78; it reads QWEEDEEPLEDDELPEHLRPQPKLDLSNLDS. The structured core stretch occupies residues 93–166; the sequence is TLMTFVSVTG…QERCKGVTIE (74 aa). Residues 177–180 carry the Prevents secretion from ER motif; the sequence is KDEL.

The protein belongs to the MESD family. As to quaternary structure, monomer. Interacts with Arrow and Yolkless.

It is found in the endoplasmic reticulum. Its function is as follows. Chaperone specifically assisting the folding of beta-propeller/EGF modules within the family of low-density lipoprotein receptors (LDLRs). Acts as a modulator of the Wg pathway, since some LDLRs are coreceptors for the canonical Wnt pathway. This chain is LDLR chaperone boca (boca), found in Drosophila melanogaster (Fruit fly).